A 318-amino-acid chain; its full sequence is Ribose-phosphate pyrophosphokinase 2 (318 aa).

96-101 (RQDKKD) serves as a coordination point for ATP. Mg(2+) is bound by residues D128, H130, D139, and D143. H130 lines the ATP pocket. The segment at 212-227 (KDRVAILVDDMADTCG) is binding of phosphoribosylpyrophosphate.

This sequence belongs to the ribose-phosphate pyrophosphokinase family. As to quaternary structure, homodimer. The active form is probably a hexamer composed of 3 homodimers. Requires Mg(2+) as cofactor.

The catalysed reaction is D-ribose 5-phosphate + ATP = 5-phospho-alpha-D-ribose 1-diphosphate + AMP + H(+). Its pathway is metabolic intermediate biosynthesis; 5-phospho-alpha-D-ribose 1-diphosphate biosynthesis; 5-phospho-alpha-D-ribose 1-diphosphate from D-ribose 5-phosphate (route I): step 1/1. With respect to regulation, activated by magnesium and inorganic phosphate. Competitively or non-competitively inhibited by ADP, 2,3-bisphosphoglyceride or GDP. Functionally, catalyzes the synthesis of phosphoribosylpyrophosphate (PRPP) that is essential for nucleotide synthesis. In Xenopus tropicalis (Western clawed frog), this protein is Ribose-phosphate pyrophosphokinase 2 (prps2).